Consider the following 331-residue polypeptide: MARMYYDEDANLDLLAGKTIAIIGYGSQGHAHALNLKDSGLNVIVGLYPGSKSAEKAQAAGLTVKNVADAANIADFIMILLPDEVQKTVYKNEIEPNLQEGNTLAFAHGFNIHFGQVVPPANVDVVMVAPKGPGHLVRRTYEQGQGVPALFAVYQDASGKARDRALSYAKGIGGTRGGVLETTFREETETDLFGEQAVLCGGLSALIKAGFETLVEAGYQPELAYFECLHEVKLIVDLVVEGGLAKMRDSISNTAEYGDYTRGPRIVNEQTKAEMRKVLSEIQSGQFAREFVLENQSGKPGFTAMRRQEAEHPIEEVGKDLRAMFSWLKKV.

Residues 2–182 (ARMYYDEDAN…GGTRGGVLET (181 aa)) form the KARI N-terminal Rossmann domain. NADP(+)-binding positions include 25-28 (YGSQ), Ser-51, Ser-53, and 83-86 (DEVQ). Residue His-108 is part of the active site. Gly-134 serves as a coordination point for NADP(+). The KARI C-terminal knotted domain maps to 183–328 (TFREETETDL…KDLRAMFSWL (146 aa)). Residues Asp-191, Glu-195, Glu-227, and Glu-231 each coordinate Mg(2+). Ser-252 contributes to the substrate binding site.

The protein belongs to the ketol-acid reductoisomerase family. Mg(2+) is required as a cofactor.

The enzyme catalyses (2R)-2,3-dihydroxy-3-methylbutanoate + NADP(+) = (2S)-2-acetolactate + NADPH + H(+). The catalysed reaction is (2R,3R)-2,3-dihydroxy-3-methylpentanoate + NADP(+) = (S)-2-ethyl-2-hydroxy-3-oxobutanoate + NADPH + H(+). Its pathway is amino-acid biosynthesis; L-isoleucine biosynthesis; L-isoleucine from 2-oxobutanoate: step 2/4. It participates in amino-acid biosynthesis; L-valine biosynthesis; L-valine from pyruvate: step 2/4. Involved in the biosynthesis of branched-chain amino acids (BCAA). Catalyzes an alkyl-migration followed by a ketol-acid reduction of (S)-2-acetolactate (S2AL) to yield (R)-2,3-dihydroxy-isovalerate. In the isomerase reaction, S2AL is rearranged via a Mg-dependent methyl migration to produce 3-hydroxy-3-methyl-2-ketobutyrate (HMKB). In the reductase reaction, this 2-ketoacid undergoes a metal-dependent reduction by NADPH to yield (R)-2,3-dihydroxy-isovalerate. This Nostoc sp. (strain PCC 7120 / SAG 25.82 / UTEX 2576) protein is Ketol-acid reductoisomerase (NADP(+)).